A 726-amino-acid polypeptide reads, in one-letter code: Peroxisomal bifunctional enzyme (726 aa).

The tract at residues 1–284 (MAEYLRLPHS…FAERSAPKWS (284 aa)) is enoyl-CoA hydratase / isomerase. Lys-38 carries the N6-succinyllysine modification. Position 103 (Gly-103) interacts with substrate. Lys-167 is subject to N6-acetyllysine; alternate. Lys-167 carries the post-translational modification N6-succinyllysine; alternate. Residue Lys-173 is modified to N6-acetyllysine. At Lys-185 the chain carries N6-succinyllysine. An N6-acetyllysine; alternate modification is found at Lys-221. The residue at position 221 (Lys-221) is an N6-succinyllysine; alternate. Lys-282, Lys-292, and Lys-333 each carry N6-succinyllysine. The interval 285–575 (TPSGASWKTA…DMLCELGRFG (291 aa)) is 3-hydroxyacyl-CoA dehydrogenase. N6-acetyllysine is present on residues Lys-348 and Lys-352. Residues 352–371 (KSRQQCGQQRSGPKPRFSSS) are disordered. Polar residues predominate over residues 353 to 371 (SRQQCGQQRSGPKPRFSSS). Lys-467 is subject to N6-acetyllysine. Lys-535 bears the N6-succinyllysine mark. An N6-acetyllysine; alternate mark is found at Lys-587, Lys-594, and Lys-713. 3 positions are modified to N6-succinyllysine; alternate: Lys-587, Lys-594, and Lys-713. Positions 724–726 (SKL) match the Microbody targeting signal motif. The residue at position 725 (Lys-725) is an N6-succinyllysine.

This sequence in the N-terminal section; belongs to the enoyl-CoA hydratase/isomerase family. It in the C-terminal section; belongs to the 3-hydroxyacyl-CoA dehydrogenase family. Monomer. In terms of processing, acetylated, leading to enhanced enzyme activity. Acetylation is enhanced by up to 80% after treatment either with trichostin A (TSA) or with nicotinamide (NAM) with highest increase on Lys-348. Acetylation and enzyme activity increased by about 1.5% on addition of fatty acids.

The protein localises to the peroxisome. It catalyses the reaction a (3S)-3-hydroxyacyl-CoA = a (2E)-enoyl-CoA + H2O. The catalysed reaction is a 4-saturated-(3S)-3-hydroxyacyl-CoA = a (3E)-enoyl-CoA + H2O. The enzyme catalyses a (3Z)-enoyl-CoA = a 4-saturated (2E)-enoyl-CoA. It carries out the reaction a (3E)-enoyl-CoA = a 4-saturated (2E)-enoyl-CoA. It catalyses the reaction a (3S)-3-hydroxyacyl-CoA + NAD(+) = a 3-oxoacyl-CoA + NADH + H(+). The catalysed reaction is (2S,3S)-3-hydroxy-2-methylbutanoyl-CoA = (2E)-2-methylbut-2-enoyl-CoA + H2O. The enzyme catalyses (3S)-hydroxyhexadecanoyl-CoA + NAD(+) = 3-oxohexadecanoyl-CoA + NADH + H(+). It carries out the reaction (3S)-hydroxyhexadecanoyl-CoA = (2E)-hexadecenoyl-CoA + H2O. It catalyses the reaction (2E)-hexadecenedioyl-CoA + H2O = (3S)-hydroxyhexadecanedioyl-CoA. The catalysed reaction is (3S)-hydroxyhexadecanedioyl-CoA + NAD(+) = 3-oxohexadecanedioyl-CoA + NADH + H(+). The enzyme catalyses (3E,5Z)-tetradecadienoyl-CoA = (2E,5Z)-tetradecadienoyl-CoA. It carries out the reaction (3E,5Z)-octadienoyl-CoA = (2E,5Z)-octadienoyl-CoA. It catalyses the reaction (3S)-hydroxydecanoyl-CoA + NAD(+) = 3-oxodecanoyl-CoA + NADH + H(+). The catalysed reaction is (3E)-decenoyl-CoA = (2E)-decenoyl-CoA. The enzyme catalyses (3Z)-hexenoyl-CoA = (2E)-hexenoyl-CoA. It carries out the reaction (3E)-hexenoyl-CoA = (2E)-hexenoyl-CoA. It catalyses the reaction (3S)-hydroxydecanoyl-CoA = (2E)-decenoyl-CoA + H2O. The catalysed reaction is (3S)-hydroxyhexanoyl-CoA = (2E)-hexenoyl-CoA + H2O. It participates in lipid metabolism; fatty acid beta-oxidation. With respect to regulation, enzyme activity enhanced by acetylation. Peroxisomal trifunctional enzyme possessing 2-enoyl-CoA hydratase, 3-hydroxyacyl-CoA dehydrogenase, and delta 3, delta 2-enoyl-CoA isomerase activities. Catalyzes two of the four reactions of the long chain fatty acids peroxisomal beta-oxidation pathway. Can also use branched-chain fatty acids such as 2-methyl-2E-butenoyl-CoA as a substrate, which is hydrated into (2S,3S)-3-hydroxy-2-methylbutanoyl-CoA. Optimal isomerase for 2,5 double bonds into 3,5 form isomerization in a range of enoyl-CoA species. Also able to isomerize both 3-cis and 3-trans double bonds into the 2-trans form in a range of enoyl-CoA species. Regulates the amount of medium-chain dicarboxylic fatty acids which are essential regulators of all fatty acid oxidation pathways. Also involved in the degradation of long-chain dicarboxylic acids through peroxisomal beta-oxidation. This chain is Peroxisomal bifunctional enzyme (EHHADH), found in Cavia porcellus (Guinea pig).